Here is a 380-residue protein sequence, read N- to C-terminus: Enoyl-[acyl-carrier-protein] reductase, mitochondrial (380 aa).

The N-terminal 9 residues, Met1–Met9, are a transit peptide targeting the mitochondrion. Catalysis depends on Tyr73, which acts as the Proton donor. NADP(+)-binding positions include Asn157, Thr185 to Val188, Arg208 to Arg210, Tyr283 to Met286, and Tyr308 to Val310. Ser339 bears the Phosphoserine mark. NADP(+) is bound at residue Lys373.

The protein belongs to the zinc-containing alcohol dehydrogenase family. Quinone oxidoreductase subfamily. In terms of assembly, homodimer or in a complex with other proteins. Interacts with ARS1.

It localises to the mitochondrion matrix. It carries out the reaction a 2,3-saturated acyl-[ACP] + NADP(+) = a (2E)-enoyl-[ACP] + NADPH + H(+). The catalysed reaction is (2E,4E)-hexadienoyl-CoA + NADPH + H(+) = (4E)-hexenoyl-CoA + NADP(+). The enzyme catalyses (2E)-hexenoyl-CoA + NADPH + H(+) = hexanoyl-CoA + NADP(+). Functionally, catalyzes the NADPH-dependent reduction of trans-2-enoyl thioesters in mitochondrial fatty acid synthesis (fatty acid synthesis type II). Fatty acid chain elongation in mitochondria uses acyl carrier protein (ACP) as an acyl group carrier, but the enzyme accepts both ACP and CoA thioesters as substrates in vitro. Required for respiration and the maintenance of the mitochondrial compartment. The protein is Enoyl-[acyl-carrier-protein] reductase, mitochondrial (ETR1) of Saccharomyces cerevisiae (strain ATCC 204508 / S288c) (Baker's yeast).